The chain runs to 174 residues: Co-chaperone protein HscB (174 aa).

Positions Asn-2–Leu-74 constitute a J domain.

Belongs to the HscB family. As to quaternary structure, interacts with HscA and stimulates its ATPase activity. Interacts with IscU.

In terms of biological role, co-chaperone involved in the maturation of iron-sulfur cluster-containing proteins. Seems to help targeting proteins to be folded toward HscA. This chain is Co-chaperone protein HscB, found in Buchnera aphidicola subsp. Acyrthosiphon pisum (strain Tuc7).